The following is a 152-amino-acid chain: Aspartate carbamoyltransferase regulatory chain (152 aa).

Zn(2+)-binding residues include C108, C113, C136, and C139.

It belongs to the PyrI family. Contains catalytic and regulatory chains. Zn(2+) serves as cofactor.

Involved in allosteric regulation of aspartate carbamoyltransferase. This chain is Aspartate carbamoyltransferase regulatory chain, found in Pyrococcus furiosus (strain ATCC 43587 / DSM 3638 / JCM 8422 / Vc1).